A 263-amino-acid polypeptide reads, in one-letter code: uncharacterized protein (263 aa).

An N-terminal signal peptide occupies residues 1–22 (MEYLKRLALLISVIILTIFIMG). Residue C23 is the site of N-palmitoyl cysteine attachment. C23 is lipidated: S-diacylglycerol cysteine.

The protein belongs to the staphylococcal tandem lipoprotein family.

The protein resides in the cell membrane. This is an uncharacterized protein from Staphylococcus aureus (strain USA300).